The following is a 258-amino-acid chain: Acetylglutamate kinase (258 aa).

Residues 41-42 (GG), Arg-63, and Asn-156 each bind substrate.

Belongs to the acetylglutamate kinase family. ArgB subfamily.

The protein resides in the cytoplasm. The enzyme catalyses N-acetyl-L-glutamate + ATP = N-acetyl-L-glutamyl 5-phosphate + ADP. It functions in the pathway amino-acid biosynthesis; L-arginine biosynthesis; N(2)-acetyl-L-ornithine from L-glutamate: step 2/4. Catalyzes the ATP-dependent phosphorylation of N-acetyl-L-glutamate. The protein is Acetylglutamate kinase of Bacillus amyloliquefaciens (Bacillus velezensis).